We begin with the raw amino-acid sequence, 434 residues long: ATP-dependent protease ATPase subunit HslU (434 aa).

ATP contacts are provided by residues isoleucine 18, glycine 60–glutamate 65, aspartate 247, glutamate 312, and arginine 384.

Belongs to the ClpX chaperone family. HslU subfamily. A double ring-shaped homohexamer of HslV is capped on each side by a ring-shaped HslU homohexamer. The assembly of the HslU/HslV complex is dependent on binding of ATP.

Its subcellular location is the cytoplasm. Functionally, ATPase subunit of a proteasome-like degradation complex; this subunit has chaperone activity. The binding of ATP and its subsequent hydrolysis by HslU are essential for unfolding of protein substrates subsequently hydrolyzed by HslV. HslU recognizes the N-terminal part of its protein substrates and unfolds these before they are guided to HslV for hydrolysis. This is ATP-dependent protease ATPase subunit HslU from Brucella anthropi (strain ATCC 49188 / DSM 6882 / CCUG 24695 / JCM 21032 / LMG 3331 / NBRC 15819 / NCTC 12168 / Alc 37) (Ochrobactrum anthropi).